A 179-amino-acid polypeptide reads, in one-letter code: Large ribosomal subunit protein uL6 (179 aa).

It belongs to the universal ribosomal protein uL6 family. In terms of assembly, part of the 50S ribosomal subunit.

This protein binds to the 23S rRNA, and is important in its secondary structure. It is located near the subunit interface in the base of the L7/L12 stalk, and near the tRNA binding site of the peptidyltransferase center. This Syntrophus aciditrophicus (strain SB) protein is Large ribosomal subunit protein uL6.